A 417-amino-acid chain; its full sequence is Actin-related protein 10 (417 aa).

It belongs to the actin family. Subunit of dynactin, a multiprotein complex part of a tripartite complex with dynein and a adapter, such as BICDL1, BICD2 or HOOK3. The dynactin complex is built around ACTR1A/ACTB filament and consists of an actin-related filament composed of a shoulder domain, a pointed end and a barbed end. Its length is defined by its flexible shoulder domain. The soulder is composed of 2 DCTN1 subunits, 4 DCTN2 and 2 DCTN3. The 4 DCNT2 (via N-terminus) bind the ACTR1A filament and act as molecular rulers to determine the length. The pointed end is important for binding dynein-dynactin cargo adapters. Consists of 4 subunits: ACTR10, DCNT4, DCTN5 and DCTN6. The barbed end is composed of a CAPZA1:CAPZB heterodimers, which binds ACTR1A/ACTB filament and dynactin and stabilizes dynactin.

It localises to the cytoplasm. Its subcellular location is the cytoskeleton. In terms of biological role, part of the dynactin complex that activates the molecular motor dynein for ultra-processive transport along microtubules. The chain is Actin-related protein 10 (ACTR10) from Sus scrofa (Pig).